We begin with the raw amino-acid sequence, 612 residues long: UvrABC system protein C (612 aa).

Positions 20-98 (THSGVYRMLD…IKQHRPKYNI (79 aa)) constitute a GIY-YIG domain. The UVR domain maps to 208–243 (SSVLEEISAKMYQASEDMEYEKAQVYRDQLVILRKL).

The protein belongs to the UvrC family. As to quaternary structure, interacts with UvrB in an incision complex.

It is found in the cytoplasm. The UvrABC repair system catalyzes the recognition and processing of DNA lesions. UvrC both incises the 5' and 3' sides of the lesion. The N-terminal half is responsible for the 3' incision and the C-terminal half is responsible for the 5' incision. This chain is UvrABC system protein C, found in Francisella philomiragia subsp. philomiragia (strain ATCC 25017 / CCUG 19701 / FSC 153 / O#319-036).